Reading from the N-terminus, the 986-residue chain is Isoleucine--tRNA ligase (986 aa).

Positions 534–538 (EMHKS) match the 'KMSKS' region motif. Lys-537 serves as a coordination point for ATP.

This sequence belongs to the class-I aminoacyl-tRNA synthetase family. IleS type 2 subfamily. In terms of assembly, monomer. Requires Zn(2+) as cofactor.

Its subcellular location is the cytoplasm. It catalyses the reaction tRNA(Ile) + L-isoleucine + ATP = L-isoleucyl-tRNA(Ile) + AMP + diphosphate. In terms of biological role, catalyzes the attachment of isoleucine to tRNA(Ile). As IleRS can inadvertently accommodate and process structurally similar amino acids such as valine, to avoid such errors it has two additional distinct tRNA(Ile)-dependent editing activities. One activity is designated as 'pretransfer' editing and involves the hydrolysis of activated Val-AMP. The other activity is designated 'posttransfer' editing and involves deacylation of mischarged Val-tRNA(Ile). The protein is Isoleucine--tRNA ligase (ileS) of Saccharolobus solfataricus (strain ATCC 35092 / DSM 1617 / JCM 11322 / P2) (Sulfolobus solfataricus).